The following is a 210-amino-acid chain: Proteasome subunit beta (210 aa).

The propeptide at 1 to 9 is removed in mature form; by autocatalysis; that stretch reads MDNDKHLKG. Residue threonine 10 is the Nucleophile of the active site.

It belongs to the peptidase T1B family. The 20S proteasome core is composed of 14 alpha and 14 beta subunits that assemble into four stacked heptameric rings, resulting in a barrel-shaped structure. The two inner rings, each composed of seven catalytic beta subunits, are sandwiched by two outer rings, each composed of seven alpha subunits. The catalytic chamber with the active sites is on the inside of the barrel. Has a gated structure, the ends of the cylinder being occluded by the N-termini of the alpha-subunits. Is capped at one or both ends by the proteasome regulatory ATPase, PAN.

The protein resides in the cytoplasm. It catalyses the reaction Cleavage of peptide bonds with very broad specificity.. Its activity is regulated as follows. The formation of the proteasomal ATPase PAN-20S proteasome complex, via the docking of the C-termini of PAN into the intersubunit pockets in the alpha-rings, triggers opening of the gate for substrate entry. Interconversion between the open-gate and close-gate conformations leads to a dynamic regulation of the 20S proteasome proteolysis activity. Functionally, component of the proteasome core, a large protease complex with broad specificity involved in protein degradation. This is Proteasome subunit beta from Methanohalophilus mahii (strain ATCC 35705 / DSM 5219 / SLP).